The sequence spans 206 residues: Holliday junction branch migration complex subunit RuvA (206 aa).

Residues 1–62 (MYDYLKGLIT…EDAQVLYGFP (62 aa)) form a domain I region. Residues 63–141 (NLDQRELFRK…SLLETIELPS (79 aa)) are domain II. The tract at residues 142–152 (TEDELPLFGVH) is flexible linker. The tract at residues 153–206 (PYKHELEEAILALAALGYSEKELEKIRPLLEDNDKLETTDAYMKQALQLLLKLK) is domain III.

This sequence belongs to the RuvA family. As to quaternary structure, homotetramer. Forms an RuvA(8)-RuvB(12)-Holliday junction (HJ) complex. HJ DNA is sandwiched between 2 RuvA tetramers; dsDNA enters through RuvA and exits via RuvB. An RuvB hexamer assembles on each DNA strand where it exits the tetramer. Each RuvB hexamer is contacted by two RuvA subunits (via domain III) on 2 adjacent RuvB subunits; this complex drives branch migration. In the full resolvosome a probable DNA-RuvA(4)-RuvB(12)-RuvC(2) complex forms which resolves the HJ.

The protein resides in the cytoplasm. In terms of biological role, the RuvA-RuvB-RuvC complex processes Holliday junction (HJ) DNA during genetic recombination and DNA repair, while the RuvA-RuvB complex plays an important role in the rescue of blocked DNA replication forks via replication fork reversal (RFR). RuvA specifically binds to HJ cruciform DNA, conferring on it an open structure. The RuvB hexamer acts as an ATP-dependent pump, pulling dsDNA into and through the RuvAB complex. HJ branch migration allows RuvC to scan DNA until it finds its consensus sequence, where it cleaves and resolves the cruciform DNA. The polypeptide is Holliday junction branch migration complex subunit RuvA (Lysinibacillus sphaericus (strain C3-41)).